We begin with the raw amino-acid sequence, 475 residues long: Enolase (475 aa).

Q179 is a (2R)-2-phosphoglycerate binding site. Catalysis depends on E221, which acts as the Proton donor. 3 residues coordinate Mg(2+): D258, E312, and D339. Positions 364, 393, 394, and 415 each coordinate (2R)-2-phosphoglycerate. The Proton acceptor role is filled by K364. The interval 454 to 475 (STPAATPKKSPAKKTTKAKSKK) is disordered. Positions 463-475 (SPAKKTTKAKSKK) are enriched in basic residues.

Belongs to the enolase family. The cofactor is Mg(2+).

Its subcellular location is the cell membrane. It is found in the cytoplasm. It localises to the secreted. The protein localises to the cell surface. It carries out the reaction (2R)-2-phosphoglycerate = phosphoenolpyruvate + H2O. It functions in the pathway carbohydrate degradation; glycolysis; pyruvate from D-glyceraldehyde 3-phosphate: step 4/5. Its function is as follows. Catalyzes the reversible conversion of 2-phosphoglycerate (2-PG) into phosphoenolpyruvate (PEP). It is essential for the degradation of carbohydrates via glycolysis. 'Moonlights' as a plasminogen receptor. Binds host (chicken) plasminogen; enolase antiserum inhibits M.gallisepticum adherence to chicken embryo fibroblasts. In Mycoplasmoides gallisepticum (strain R(low / passage 15 / clone 2)) (Mycoplasma gallisepticum), this protein is Enolase.